The chain runs to 583 residues: Zinc finger protein 277 (583 aa).

2 C2H2-type zinc fingers span residues 351-375 (LQCLYCEKTFRDKNTLKDHMRKKQH) and 482-508 (HQCKCYSCHVKFKSKADLRTHMEDTKH).

The protein belongs to the ZNF277 family. As to quaternary structure, interacts (via zinc-finger domains) with RPS2/40S ribosomal protein S2, perhaps as nascent RPS2 is synthesized during translation; the interaction is direct; the interaction is extra-ribosomal. Interaction with RPS2 competes with the binding of RPS2 to protein arginine methyltransferase PRMT3. Interacts with Polycomb group (PcG) complex protein BMI1. May be part of a complex including at least ZNF277, BMI1 and RNF2/RING2.

The protein resides in the nucleus. The protein localises to the cytoplasm. It is found in the nucleolus. It localises to the chromosome. Its function is as follows. Probable transcription factor. Involved in modulation of cellular senescence; represses transcription of the tumor suppressor gene INK4A/ARF, perhaps acting via the Polycomb group (PcG) complex PRC1. The protein is Zinc finger protein 277 of Mus musculus (Mouse).